The chain runs to 193 residues: Ion-translocating oxidoreductase complex subunit A (193 aa).

The next 6 helical transmembrane spans lie at 5 to 25, 39 to 59, 63 to 83, 102 to 122, 134 to 154, and 171 to 191; these read LLLL…FLGL, IGMG…SYLI, ILAP…VIAV, VLGI…VALL, IIYG…FSAM, and SIAM…TGLV.

This sequence belongs to the NqrDE/RnfAE family. The complex is composed of six subunits: RnfA, RnfB, RnfC, RnfD, RnfE and RnfG.

Its subcellular location is the cell inner membrane. Functionally, part of a membrane-bound complex that couples electron transfer with translocation of ions across the membrane. The polypeptide is Ion-translocating oxidoreductase complex subunit A (Aliivibrio salmonicida (strain LFI1238) (Vibrio salmonicida (strain LFI1238))).